The chain runs to 271 residues: NADPH-dependent 7-cyano-7-deazaguanine reductase (271 aa).

81-83 (IES) serves as a coordination point for substrate. 83–84 (SK) contributes to the NADPH binding site. Residue Cys-177 is the Thioimide intermediate of the active site. The active-site Proton donor is the Asp-184. 216-217 (HE) contributes to the substrate binding site. Position 245–246 (245–246 (RG)) interacts with NADPH.

The protein belongs to the GTP cyclohydrolase I family. QueF type 2 subfamily. Homodimer.

Its subcellular location is the cytoplasm. The catalysed reaction is 7-aminomethyl-7-carbaguanine + 2 NADP(+) = 7-cyano-7-deazaguanine + 2 NADPH + 3 H(+). It participates in tRNA modification; tRNA-queuosine biosynthesis. In terms of biological role, catalyzes the NADPH-dependent reduction of 7-cyano-7-deazaguanine (preQ0) to 7-aminomethyl-7-deazaguanine (preQ1). This chain is NADPH-dependent 7-cyano-7-deazaguanine reductase, found in Xanthomonas campestris pv. campestris (strain 8004).